Consider the following 452-residue polypeptide: Caspase-2 (452 aa).

The residue at position 2 (A2) is an N-acetylalanine. The propeptide occupies 2-169 (AASSGRSQSS…TMEHSLDNGD (168 aa)). A CARD domain is found at 32-121 (MHPDHQETLK…GHLEDLLLTT (90 aa)). Phosphoserine is present on S157. Active-site residues include H277 and C320. A propeptide spanning residues 326-333 (DRGVDQQD) is cleaved from the precursor. Positions 327–336 (RGVDQQDGKN) are enriched in basic and acidic residues. Residues 327–349 (RGVDQQDGKNHAQSPGCEESDAG) are disordered. S340 bears the Phosphoserine mark.

This sequence belongs to the peptidase C14A family. In terms of assembly, heterotetramer that consists of two anti-parallel arranged heterodimers, each one formed by a p18 subunit and a p12 subunit. Forms a complex named the PIDDosome with PIDD1 and CRADD. Interacts with NOL3 (via CARD domain); inhibits CASP2 activity in a phosphorylation-dependent manner. In terms of processing, the mature protease can process its own propeptide, but not that of other caspases.

The enzyme catalyses Strict requirement for an Asp residue at P1, with 316-Asp being essential for proteolytic activity and has a preferred cleavage sequence of Val-Asp-Val-Ala-Asp-|-.. Its function is as follows. Involved in the activation cascade of caspases responsible for apoptosis execution. Might function by either activating some proteins required for cell death or inactivating proteins necessary for cell survival. Associates with PIDD1 and CRADD to form the PIDDosome, a complex that activates CASP2 and triggers apoptosis in response to genotoxic stress. The sequence is that of Caspase-2 (Casp2) from Rattus norvegicus (Rat).